The primary structure comprises 213 residues: 3,4-dihydroxy-2-butanone 4-phosphate synthase (213 aa).

Residues 37–38 (RE), Asp42, 150–154 (RAGHT), and Glu174 each bind D-ribulose 5-phosphate. Glu38 is a binding site for Mg(2+). His153 serves as a coordination point for Mg(2+).

Belongs to the DHBP synthase family. In terms of assembly, homodimer. It depends on Mg(2+) as a cofactor. Requires Mn(2+) as cofactor.

The enzyme catalyses D-ribulose 5-phosphate = (2S)-2-hydroxy-3-oxobutyl phosphate + formate + H(+). It participates in cofactor biosynthesis; riboflavin biosynthesis; 2-hydroxy-3-oxobutyl phosphate from D-ribulose 5-phosphate: step 1/1. Functionally, catalyzes the conversion of D-ribulose 5-phosphate to formate and 3,4-dihydroxy-2-butanone 4-phosphate. The protein is 3,4-dihydroxy-2-butanone 4-phosphate synthase of Buchnera aphidicola subsp. Schizaphis graminum (strain Sg).